The following is a 208-amino-acid chain: FMN-dependent NADH:quinone oxidoreductase 1 (208 aa).

FMN contacts are provided by residues serine 10, 15–17, and 97–100; these read SES and MWNF.

Belongs to the azoreductase type 1 family. In terms of assembly, homodimer. FMN is required as a cofactor.

It catalyses the reaction 2 a quinone + NADH + H(+) = 2 a 1,4-benzosemiquinone + NAD(+). The enzyme catalyses N,N-dimethyl-1,4-phenylenediamine + anthranilate + 2 NAD(+) = 2-(4-dimethylaminophenyl)diazenylbenzoate + 2 NADH + 2 H(+). Quinone reductase that provides resistance to thiol-specific stress caused by electrophilic quinones. Functionally, also exhibits azoreductase activity. Catalyzes the reductive cleavage of the azo bond in aromatic azo compounds to the corresponding amines. The polypeptide is FMN-dependent NADH:quinone oxidoreductase 1 (Bradyrhizobium diazoefficiens (strain JCM 10833 / BCRC 13528 / IAM 13628 / NBRC 14792 / USDA 110)).